The chain runs to 663 residues: Glucans biosynthesis glucosyltransferase H (663 aa).

Helical transmembrane passes span 64 to 86, 101 to 123, 413 to 435, 470 to 492, 558 to 580, and 584 to 606; these read WMLGLMTIAMGVAGWKASFDTIA, LAPLFLALSLWFCTALIGFVVLM, LVIGVLSYALSPLWFFCLSAGLI, AWAMIITFVLLFGPKILGAILVL, EAWAAMGWISLSGLILAASFWFT, and LTATAPILAGLVLAVPLTMLGAH.

Belongs to the glycosyltransferase 2 family. OpgH subfamily.

Its subcellular location is the cell inner membrane. It participates in glycan metabolism; osmoregulated periplasmic glucan (OPG) biosynthesis. In terms of biological role, involved in the biosynthesis of osmoregulated periplasmic glucans (OPGs). The polypeptide is Glucans biosynthesis glucosyltransferase H (Caulobacter vibrioides (strain ATCC 19089 / CIP 103742 / CB 15) (Caulobacter crescentus)).